Here is a 208-residue protein sequence, read N- to C-terminus: Cysteine-rich protein 2 (208 aa).

In terms of domain architecture, LIM zinc-binding 1 spans 5-57 (CPKCDKTVYFAEKVSSLGKDWHKFCLKCERCSKTLTPGGHAEHDGKPFCHKPC). An N6-acetyllysine modification is found at Lys23. The tract at residues 98 to 119 (AEERKASGPPKGPSRASSVTTF) is disordered. Phosphoserine is present on Ser104. The LIM zinc-binding 2 domain maps to 126-178 (CPRCSKKVYFAEKVTSLGKDWHRPCLRCERCGKTLTPGGHAEHDGQPYCHKPC). Residues Lys138 and Lys144 each carry the N6-acetyllysine modification.

Interacts with TGFB1I1. As to expression, widespread tissue expression; highest levels in the heart.

The sequence is that of Cysteine-rich protein 2 (CRIP2) from Homo sapiens (Human).